Reading from the N-terminus, the 265-residue chain is 5'-nucleotidase SurE (265 aa).

A divalent metal cation contacts are provided by Asp8, Asp9, Ser39, and Asn96.

The protein belongs to the SurE nucleotidase family. Requires a divalent metal cation as cofactor.

The protein resides in the cytoplasm. It carries out the reaction a ribonucleoside 5'-phosphate + H2O = a ribonucleoside + phosphate. Functionally, nucleotidase that shows phosphatase activity on nucleoside 5'-monophosphates. In Dehalococcoides mccartyi (strain CBDB1), this protein is 5'-nucleotidase SurE.